A 1037-amino-acid polypeptide reads, in one-letter code: Multidrug resistance protein MdtF (1037 aa).

Residues 1–9 lie on the Cytoplasmic side of the membrane; sequence MANYFIDRP. The chain crosses the membrane as a helical span at residues 10–30; it reads VFAWVLAIIMMLAGGLAIMNL. Residues 31–338 are Periplasmic-facing; that stretch reads PVAQYPQIAP…TTPFIKISIQ (308 aa). The chain crosses the membrane as a helical span at residues 339–359; that stretch reads EVFKTLVEAIILVFLVMYLFL. At 360–369 the chain is on the cytoplasmic side; it reads QNFRATIIPT. The chain crosses the membrane as a helical span at residues 370-390; the sequence is IAVPVVILGTFAILSAVGFTI. The Periplasmic segment spans residues 391–392; it reads NT. The chain crosses the membrane as a helical span at residues 393-413; sequence LTMFGMVLAIGLLVDDAIVVV. The Cytoplasmic portion of the chain corresponds to 414-440; that stretch reads ENVERVIAEDKLPPKEATHKSMGQIQR. The chain crosses the membrane as a helical span at residues 441-461; sequence ALVGIAVVLSAVFMPMAFMSG. Topologically, residues 462–471 are periplasmic; the sequence is ATGEIYRQFS. Residues 472–492 form a helical membrane-spanning segment; sequence ITLISSMLLSVFVAMSLTPAL. Residues 493-534 lie on the Cytoplasmic side of the membrane; it reads CATILKAAPEGGHKPNALFARFNTLFEKSTQHYTDSTRSLLR. Residues 535 to 555 traverse the membrane as a helical segment; the sequence is CTGRYMVVYLLICAGMAVLFL. The Periplasmic segment spans residues 556–870; it reads RTPTSFLPEE…SYQEALSSNQ (315 aa). The chain crosses the membrane as a helical span at residues 871 to 891; it reads APALYAISLVVVFLALAALYE. A topological domain (cytoplasmic) is located at residue serine 892. Residues 893–913 form a helical membrane-spanning segment; it reads WSIPFSVMLVVPLGVVGALLA. Topologically, residues 914–927 are periplasmic; the sequence is TDLRGLSNDVYFQV. Residues 928 to 948 form a helical membrane-spanning segment; sequence GLLTTIGLSAKNAILIVEFAV. Residues 949–972 lie on the Cytoplasmic side of the membrane; that stretch reads EMMQKEGKTPVEAIIEAARMRLRP. A helical transmembrane segment spans residues 973 to 993; sequence ILMTSLAFILGVLPLVISHGA. The Periplasmic segment spans residues 994 to 1006; the sequence is GSGAQNAVGTGVM. The chain crosses the membrane as a helical span at residues 1007–1027; the sequence is GGMFAATVLAIYFVPVFFVVV. The Cytoplasmic segment spans residues 1028–1037; that stretch reads EHLFARFKKA.

This sequence belongs to the resistance-nodulation-cell division (RND) (TC 2.A.6) family. Homotrimer. Part of the tripartite efflux system MdtEF-TolC, which is composed of an inner membrane transporter, MdtF, a membrane fusion protein, MdtE, and an outer membrane component, TolC. The complex forms a large protein conduit and can translocate molecules across both the inner and outer membranes.

The protein localises to the cell inner membrane. Its function is as follows. Part of the tripartite efflux system MdtEF-TolC, which confers resistance to various compounds. This chain is Multidrug resistance protein MdtF (mdtF), found in Escherichia coli O6:H1 (strain CFT073 / ATCC 700928 / UPEC).